The sequence spans 206 residues: MSRTLVLVRHGQSEWNLKNLFTGWRDPGLTEQGHAEAKAAGQRLKAAGLKFDIAYTSALSRAQVTCQHILDQLGQSDLKTIRDQALNERDYGDLSGLNKDDARAKWGEEQVHIWRRSYDVPPPGGESLKDTGARVWPYYLHTVQPHVLRGETVLVAAHGNSLRALIMALDGLTPEQILKQELNTGVPVVYRLNADSTVASKEILEA.

Substrate contacts are provided by residues 9-16, 22-23, R61, 88-91, K99, 115-116, and 159-160; these read RHGQSEWN, TG, ERDY, RR, and GN. H10 acts as the Tele-phosphohistidine intermediate in catalysis. The Proton donor/acceptor role is filled by E88.

The protein belongs to the phosphoglycerate mutase family. BPG-dependent PGAM subfamily. In terms of assembly, homodimer.

It catalyses the reaction (2R)-2-phosphoglycerate = (2R)-3-phosphoglycerate. The protein operates within carbohydrate degradation; glycolysis; pyruvate from D-glyceraldehyde 3-phosphate: step 3/5. Functionally, catalyzes the interconversion of 2-phosphoglycerate and 3-phosphoglycerate. In Brucella anthropi (strain ATCC 49188 / DSM 6882 / CCUG 24695 / JCM 21032 / LMG 3331 / NBRC 15819 / NCTC 12168 / Alc 37) (Ochrobactrum anthropi), this protein is 2,3-bisphosphoglycerate-dependent phosphoglycerate mutase.